A 337-amino-acid chain; its full sequence is Hsp90 co-chaperone Cdc37-like 1 (337 aa).

Residues 1-11 are compositionally biased toward pro residues; it reads MEQPWPPPGPW. The disordered stretch occupies residues 1-43; the sequence is MEQPWPPPGPWSLPRAEGEAEEESDLDLSPGSPRCPQLPGGGT. Residues 2 to 171 form a self-association region; sequence EQPWPPPGPW…HEQKIRHFGM (170 aa). Phosphoserine occurs at positions 32 and 88. A coiled-coil region spans residues 84–122; that stretch reads HNSESLDQEHAKAQTAISELRQREEEWRQKEEALVQRER. Positions 147-277 are self-association and interaction with Hsp90; it reads KETEDEDKSK…SRVRLYSQSP (131 aa). An interaction with Hsp70 region spans residues 267–337; sequence KSRVRLYSQS…DDEPKMMDTV (71 aa). The segment at 278–337 is required for interaction with STIP1; sequence NFQPVTVQNHVPHSGVGSIGLLESLPQNPDYLQYSINTALCSLNSVVHKEDDEPKMMDTV.

Belongs to the CDC37 family. Self-associates. Forms complexes with Hsp70 and Hsp90. Interacts with CDC37, FKBP4, PPID and STIP1.

It is found in the cytoplasm. Functionally, co-chaperone that binds to numerous proteins and promotes their interaction with Hsp70 and Hsp90. The polypeptide is Hsp90 co-chaperone Cdc37-like 1 (CDC37L1) (Bos taurus (Bovine)).